The primary structure comprises 76 residues: Spermatid nuclear transition protein 3 (76 aa).

The segment covering 1-11 (AKVTEKSWQPQ) has biased composition (polar residues). Disordered regions lie at residues 1 to 34 (AKVT…GKVR) and 56 to 76 (VITT…ETIP). Residues 16–34 (KRWKKRKTPSQPRSRGKVR) show a composition bias toward basic residues.

It is found in the nucleus. The protein resides in the chromosome. Involved in nuclear basic protein transition: histones are replaced by spermatid specific proteins which are themselves replaced by protamines in late spermatids. In Sus scrofa (Pig), this protein is Spermatid nuclear transition protein 3 (TNP3).